Consider the following 226-residue polypeptide: Ribose-5-phosphate isomerase A (226 aa).

Residues Thr-26–Thr-29, Asp-82–Asp-85, and Lys-95–Gly-98 contribute to the substrate site. The Proton acceptor role is filled by Glu-104. Lys-122 provides a ligand contact to substrate.

The protein belongs to the ribose 5-phosphate isomerase family. In terms of assembly, homodimer.

It carries out the reaction aldehydo-D-ribose 5-phosphate = D-ribulose 5-phosphate. Its pathway is carbohydrate degradation; pentose phosphate pathway; D-ribose 5-phosphate from D-ribulose 5-phosphate (non-oxidative stage): step 1/1. Functionally, catalyzes the reversible conversion of ribose-5-phosphate to ribulose 5-phosphate. This is Ribose-5-phosphate isomerase A from Streptococcus thermophilus (strain CNRZ 1066).